The sequence spans 518 residues: Protein nucleotidyltransferase YdiU (518 aa).

Positions 1–22 are disordered; the sequence is MTHLQFDNRLRAELPGDPEEGP. Residues G100, G102, R103, K123, D135, G136, R193, and R200 each coordinate ATP. D270 serves as the catalytic Proton acceptor. 2 residues coordinate Mg(2+): N271 and D280. D280 contacts ATP.

This sequence belongs to the SELO family. Requires Mg(2+) as cofactor. It depends on Mn(2+) as a cofactor.

It catalyses the reaction L-seryl-[protein] + ATP = 3-O-(5'-adenylyl)-L-seryl-[protein] + diphosphate. The catalysed reaction is L-threonyl-[protein] + ATP = 3-O-(5'-adenylyl)-L-threonyl-[protein] + diphosphate. The enzyme catalyses L-tyrosyl-[protein] + ATP = O-(5'-adenylyl)-L-tyrosyl-[protein] + diphosphate. It carries out the reaction L-histidyl-[protein] + UTP = N(tele)-(5'-uridylyl)-L-histidyl-[protein] + diphosphate. It catalyses the reaction L-seryl-[protein] + UTP = O-(5'-uridylyl)-L-seryl-[protein] + diphosphate. The catalysed reaction is L-tyrosyl-[protein] + UTP = O-(5'-uridylyl)-L-tyrosyl-[protein] + diphosphate. In terms of biological role, nucleotidyltransferase involved in the post-translational modification of proteins. It can catalyze the addition of adenosine monophosphate (AMP) or uridine monophosphate (UMP) to a protein, resulting in modifications known as AMPylation and UMPylation. The chain is Protein nucleotidyltransferase YdiU from Xanthomonas campestris pv. campestris (strain 8004).